Consider the following 347-residue polypeptide: Protein RecA (347 aa).

An ATP-binding site is contributed by 68–75 (GPESSGKT).

Belongs to the RecA family.

The protein localises to the cytoplasm. Functionally, can catalyze the hydrolysis of ATP in the presence of single-stranded DNA, the ATP-dependent uptake of single-stranded DNA by duplex DNA, and the ATP-dependent hybridization of homologous single-stranded DNAs. It interacts with LexA causing its activation and leading to its autocatalytic cleavage. This is Protein RecA from Rhodococcus jostii (strain RHA1).